Reading from the N-terminus, the 248-residue chain is Large ribosomal subunit protein uL4 (248 aa).

The segment at Gln-44–Leu-109 is disordered. A compositionally biased stretch (basic and acidic residues) spans Pro-92–Leu-109.

This sequence belongs to the universal ribosomal protein uL4 family. As to quaternary structure, part of the 50S ribosomal subunit.

One of the primary rRNA binding proteins, this protein initially binds near the 5'-end of the 23S rRNA. It is important during the early stages of 50S assembly. It makes multiple contacts with different domains of the 23S rRNA in the assembled 50S subunit and ribosome. In terms of biological role, forms part of the polypeptide exit tunnel. The chain is Large ribosomal subunit protein uL4 from Natronomonas pharaonis (strain ATCC 35678 / DSM 2160 / CIP 103997 / JCM 8858 / NBRC 14720 / NCIMB 2260 / Gabara) (Halobacterium pharaonis).